A 691-amino-acid polypeptide reads, in one-letter code: MARTQAEPPASQPDARAAWLRDQLERANYAYYVLDQPDLPDAEYDRLFGELQQLETDHPDLVTPDSPTQRVGGEVAGGFTPVVHDAPMLSLNNGFADEDIAAFDKRVADALGKTTDLAGSVTDPVEYACELKFDGLAISLRYEHGVFVQASTRGDGTTGEDVTENVRTIRSIPLKLKGAHVPALLDVRGEVLMFKRDFARLNERQRAAEQREFANPRNAAAGSLRQLDPKITAQRPLSFFAYGIGVLDGMPMPDTHSALLDWYESFGLPVNRERAVVYGADGLLGFFRKVGEKRESLPYDIDGVVYKVNRRDEQDRLGFVSRAPRFALAHKFPAQEALTRLVAIDVQVGRTGAITPVARLEPVFVGGATVTNATLHNEDEVRRKDIRIGDTVIVRRAGDVIPEVVGALLERRPDDAAEFVMPTECPVCGSKIERLPDEAIARCTGGLFCPAQRKQALWHFAQRRALDIDGLGEKIIDQLVELNLVRTPADLFNLGFATLAELDRFAEKSAQNLLDSLEKAKHTTLARFIYGLGIRHVGESTAKDLAKHFGSLTPIMDASIEELLEVNDVGPIVAESIHQFFAEEHNRTVIEQLRAPGKVTWPEGPPAPKAPQGVLAGKTVVLTGTLPNLTRDAAKEMLEAAGAKVAGSVSKKTDYVVAGADAGSKLAKAEELGIPVLDEDGLHQLLEGNTP.

Residues Asp-41–Asp-45, Ser-90–Leu-91, and Glu-130 each bind NAD(+). Lys-132 functions as the N6-AMP-lysine intermediate in the catalytic mechanism. Arg-153, Glu-190, Lys-307, and Lys-331 together coordinate NAD(+). 4 residues coordinate Zn(2+): Cys-425, Cys-428, Cys-443, and Cys-449. The region spanning Ala-610–Pro-691 is the BRCT domain.

The protein belongs to the NAD-dependent DNA ligase family. LigA subfamily. It depends on Mg(2+) as a cofactor. Mn(2+) serves as cofactor.

The enzyme catalyses NAD(+) + (deoxyribonucleotide)n-3'-hydroxyl + 5'-phospho-(deoxyribonucleotide)m = (deoxyribonucleotide)n+m + AMP + beta-nicotinamide D-nucleotide.. Functionally, DNA ligase that catalyzes the formation of phosphodiester linkages between 5'-phosphoryl and 3'-hydroxyl groups in double-stranded DNA using NAD as a coenzyme and as the energy source for the reaction. It is essential for DNA replication and repair of damaged DNA. The polypeptide is DNA ligase (Burkholderia ambifaria (strain MC40-6)).